The sequence spans 60 residues: Large ribosomal subunit protein uL30 (60 aa).

It belongs to the universal ribosomal protein uL30 family. As to quaternary structure, part of the 50S ribosomal subunit.

The chain is Large ribosomal subunit protein uL30 from Amoebophilus asiaticus (strain 5a2).